The primary structure comprises 447 residues: Tubulin beta-2 chain (447 aa).

Residues Q11, E69, S138, G142, T143, G144, N204, and N226 each coordinate GTP. Position 69 (E69) interacts with Mg(2+). Positions 419 to 428 (VSEYQQYQDA) are enriched in polar residues. Residues 419-447 (VSEYQQYQDATSDEEGEYEDEDQEPEEDM) form a disordered region. Positions 429-447 (TSDEEGEYEDEDQEPEEDM) are enriched in acidic residues.

Belongs to the tubulin family. As to quaternary structure, dimer of alpha and beta chains. A typical microtubule is a hollow water-filled tube with an outer diameter of 25 nm and an inner diameter of 15 nM. Alpha-beta heterodimers associate head-to-tail to form protofilaments running lengthwise along the microtubule wall with the beta-tubulin subunit facing the microtubule plus end conferring a structural polarity. Microtubules usually have 13 protofilaments but different protofilament numbers can be found in some organisms and specialized cells. Mg(2+) serves as cofactor.

It localises to the cytoplasm. It is found in the cytoskeleton. Its function is as follows. Tubulin is the major constituent of microtubules, a cylinder consisting of laterally associated linear protofilaments composed of alpha- and beta-tubulin heterodimers. Microtubules grow by the addition of GTP-tubulin dimers to the microtubule end, where a stabilizing cap forms. Below the cap, tubulin dimers are in GDP-bound state, owing to GTPase activity of alpha-tubulin. In Triticum aestivum (Wheat), this protein is Tubulin beta-2 chain (TUBB2).